The sequence spans 867 residues: Piwi-like protein 1 (867 aa).

Residues M1 to G11 are compositionally biased toward basic residues. Positions M1–T70 are disordered. Residues A28–Q44 are compositionally biased toward polar residues. Residues T286–G397 enclose the PAZ domain. Residues T324–R326 form a required for binding 2'-O-methylated 3'-end of piRNAs region. The MID region stretch occupies residues S485–E621. A Piwi domain is found at I561–H853. Catalysis depends on residues D638, E676, D708, and H842.

Belongs to the argonaute family. Piwi subfamily. Requires Mg(2+) as cofactor. In terms of processing, methylated on arginine residues; required for the interaction with Tudor domain-containing protein and subsequent localization to the meiotic nuage, also named P granule.

The protein resides in the cytoplasm. Functionally, endoribonuclease that plays a central role in postnatal germ cells by repressing transposable elements and preventing their mobilization, which is essential for the germline integrity. Acts via the piRNA metabolic process, which mediates the repression of transposable elements during meiosis by forming complexes composed of piRNAs and Piwi proteins and govern the methylation and subsequent repression of transposons. Directly binds methylated piRNAs, a class of 24 to 30 nucleotide RNAs that are generated by a Dicer-independent mechanism and are primarily derived from transposons and other repeated sequence elements. Strongly prefers a uridine in the first position of their guide (g1U preference, also named 1U-bias). Besides their function in transposable elements repression, piRNAs are probably involved in other processes during meiosis such as translation regulation. Not involved in the piRNA amplification loop, also named ping-pong amplification cycle. Acts as an endoribonuclease that cleaves transposon messenger RNAs. The chain is Piwi-like protein 1 (PIWIL1) from Gallus gallus (Chicken).